Reading from the N-terminus, the 213-residue chain is ATP-dependent dethiobiotin synthetase BioD (213 aa).

Glycine 13–valine 18 provides a ligand contact to ATP. A Mg(2+)-binding site is contributed by threonine 17. Residue lysine 33 is part of the active site. Glutamate 100 contacts Mg(2+). ATP contacts are provided by residues glutamate 100–glycine 103 and proline 184–leucine 186.

Belongs to the dethiobiotin synthetase family. Homodimer. Mg(2+) is required as a cofactor.

Its subcellular location is the cytoplasm. It catalyses the reaction (7R,8S)-7,8-diammoniononanoate + CO2 + ATP = (4R,5S)-dethiobiotin + ADP + phosphate + 3 H(+). It functions in the pathway cofactor biosynthesis; biotin biosynthesis; biotin from 7,8-diaminononanoate: step 1/2. In terms of biological role, catalyzes a mechanistically unusual reaction, the ATP-dependent insertion of CO2 between the N7 and N8 nitrogen atoms of 7,8-diaminopelargonic acid (DAPA, also called 7,8-diammoniononanoate) to form a ureido ring. The sequence is that of ATP-dependent dethiobiotin synthetase BioD from Rhodopseudomonas palustris (strain BisA53).